The following is an 85-amino-acid chain: UPF0335 protein BARBAKC583_0130 (85 aa).

It belongs to the UPF0335 family.

This chain is UPF0335 protein BARBAKC583_0130, found in Bartonella bacilliformis (strain ATCC 35685 / KC583 / Herrer 020/F12,63).